Consider the following 398-residue polypeptide: uncharacterized protein (398 aa).

This is an uncharacterized protein from Ostreid herpesvirus 1 (isolate France) (OsHV-1).